The chain runs to 264 residues: Ribosomal RNA small subunit methyltransferase A (264 aa).

The S-adenosyl-L-methionine site is built by Asn-15, Ile-17, Gly-42, Glu-64, Asp-90, and Asn-109.

It belongs to the class I-like SAM-binding methyltransferase superfamily. rRNA adenine N(6)-methyltransferase family. RsmA subfamily.

The protein localises to the cytoplasm. The catalysed reaction is adenosine(1518)/adenosine(1519) in 16S rRNA + 4 S-adenosyl-L-methionine = N(6)-dimethyladenosine(1518)/N(6)-dimethyladenosine(1519) in 16S rRNA + 4 S-adenosyl-L-homocysteine + 4 H(+). Functionally, specifically dimethylates two adjacent adenosines (A1518 and A1519) in the loop of a conserved hairpin near the 3'-end of 16S rRNA in the 30S particle. May play a critical role in biogenesis of 30S subunits. The polypeptide is Ribosomal RNA small subunit methyltransferase A (Wolbachia pipientis subsp. Culex pipiens (strain wPip)).